Reading from the N-terminus, the 203-residue chain is Dual-action ribosomal maturation protein DarP (203 aa).

2 disordered regions span residues Met-1–Gln-31 and Gly-182–Ala-203. Positions Asp-186 to Ala-203 are enriched in acidic residues.

This sequence belongs to the DarP family.

The protein localises to the cytoplasm. Functionally, member of a network of 50S ribosomal subunit biogenesis factors which assembles along the 30S-50S interface, preventing incorrect 23S rRNA structures from forming. Promotes peptidyl transferase center (PTC) maturation. The protein is Dual-action ribosomal maturation protein DarP of Burkholderia cenocepacia (strain HI2424).